Here is a 1028-residue protein sequence, read N- to C-terminus: Pro-apoptotic serine protease nma111 (1028 aa).

The disordered stretch occupies residues 1-49 (MDLNGDAGAKRKRSSITTPAERPVKHLRPESSALTPGDSTPANGTVYDV). The segment covering 32 to 43 (SALTPGDSTPAN) has biased composition (polar residues). The interval 82 to 266 (VVSIHFCQTC…AATDYFLPLD (185 aa)) is serine protease. Active-site charge relay system residues include His-120, Asp-151, and Ser-233. PDZ domains follow at residues 289-374 (QWIL…LLVQ) and 876-957 (VFCG…VTFD). The disordered stretch occupies residues 983 to 1028 (QPSGWRTVSHDKDKYKDGIAPDAANLNPDAMDEGFDGVSDIEPDLE). Over residues 990–1001 (VSHDKDKYKDGI) the composition is skewed to basic and acidic residues. A compositionally biased stretch (acidic residues) spans 1012–1028 (AMDEGFDGVSDIEPDLE).

It belongs to the peptidase S1C family.

The protein localises to the nucleus. In terms of biological role, nuclear serine protease which mediates apoptosis. This Aspergillus niger (strain ATCC MYA-4892 / CBS 513.88 / FGSC A1513) protein is Pro-apoptotic serine protease nma111 (nma111).